Reading from the N-terminus, the 174-residue chain is Protein GrpE (174 aa).

The tract at residues 1–35 (MAQDIKNEEVEEVQEEEVVETAEETTPEKSELDLA) is disordered. The span at 9 to 25 (EVEEVQEEEVVETAEET) shows a compositional bias: acidic residues. Residues 26–35 (TPEKSELDLA) are compositionally biased toward basic and acidic residues.

Belongs to the GrpE family. Homodimer.

The protein resides in the cytoplasm. Functionally, participates actively in the response to hyperosmotic and heat shock by preventing the aggregation of stress-denatured proteins, in association with DnaK and GrpE. It is the nucleotide exchange factor for DnaK and may function as a thermosensor. Unfolded proteins bind initially to DnaJ; upon interaction with the DnaJ-bound protein, DnaK hydrolyzes its bound ATP, resulting in the formation of a stable complex. GrpE releases ADP from DnaK; ATP binding to DnaK triggers the release of the substrate protein, thus completing the reaction cycle. Several rounds of ATP-dependent interactions between DnaJ, DnaK and GrpE are required for fully efficient folding. The protein is Protein GrpE of Streptococcus pneumoniae (strain ATCC 700669 / Spain 23F-1).